Here is a 480-residue protein sequence, read N- to C-terminus: Chromosomal replication initiator protein DnaA (480 aa).

Residues 1-73 are domain I, interacts with DnaA modulators; it reads MNQDFWPFCL…GELGEEFHGQ (73 aa). Residues 73-143 are domain II; that stretch reads QPIQLELQLP…SANELAYDKT (71 aa). Residues 144-360 are domain III, AAA+ region; the sequence is RLNADFTFDT…GALNKVVAYA (217 aa). The ATP site is built by G188, G190, K191, and T192. Residues 361-480 are domain IV, binds dsDNA; it reads RFHGRGISLE…VHVLTQVLRG (120 aa).

It belongs to the DnaA family. As to quaternary structure, oligomerizes as a right-handed, spiral filament on DNA at oriC.

The protein resides in the cytoplasm. In terms of biological role, plays an essential role in the initiation and regulation of chromosomal replication. ATP-DnaA binds to the origin of replication (oriC) to initiate formation of the DNA replication initiation complex once per cell cycle. Binds the DnaA box (a 9 base pair repeat at the origin) and separates the double-stranded (ds)DNA. Forms a right-handed helical filament on oriC DNA; dsDNA binds to the exterior of the filament while single-stranded (ss)DNA is stabiized in the filament's interior. The ATP-DnaA-oriC complex binds and stabilizes one strand of the AT-rich DNA unwinding element (DUE), permitting loading of DNA polymerase. After initiation quickly degrades to an ADP-DnaA complex that is not apt for DNA replication. Binds acidic phospholipids. The sequence is that of Chromosomal replication initiator protein DnaA from Azoarcus sp. (strain BH72).